The chain runs to 241 residues: High mobility group B protein 7 (241 aa).

Composition is skewed to polar residues over residues Met1–Pro11 and Glu20–Leu29. Disordered stretches follow at residues Met1–Arg30, Thr75–Lys116, and Glu174–Tyr241. The segment covering Ala77–Thr90 has biased composition (basic and acidic residues). Residues Pro115–Asp183 constitute a DNA-binding region (HMG box). Acidic residues-rich tracts occupy residues Asn182–Asp221 and Gly229–Tyr241.

Belongs to the HMGB family. Post-translationally, phosphorylated. Expressed at low levels in lateral roots, root tips, cotyledons, leaves and flowers (including pedicels, but excluding styles).

It is found in the nucleus. Its function is as follows. Binds preferentially double-stranded supercoiled DNA. Required for karyogamy during female gametophyte development, when the two polar nuclei fuse to form the diploid central cell nucleus. The protein is High mobility group B protein 7 (HMGB7) of Arabidopsis thaliana (Mouse-ear cress).